The following is a 1037-amino-acid chain: Presequence protease, mitochondrial (1037 aa).

The transit peptide at 1 to 15 directs the protein to the mitochondrion; it reads MWRCGGRQGLGVLRR. His104 contributes to the Zn(2+) binding site. Glu107 (proton acceptor) is an active-site residue. Residues His108 and Glu205 each contribute to the Zn(2+) site. The cysteines at positions 119 and 556 are disulfide-linked. Lys759 bears the N6-acetyllysine mark. Lys770 is subject to N6-acetyllysine; alternate. Residue Lys770 is modified to N6-succinyllysine; alternate. The disordered stretch occupies residues 803–834; the sequence is IGRSKKERRPVRPHTVEKPVPSSSGGDAHVPH. Residues 804–814 are compositionally biased toward basic residues; sequence GRSKKERRPVR. An N6-succinyllysine modification is found at Lys849. The residue at position 884 (Lys884) is an N6-acetyllysine. Residue Lys946 is modified to N6-succinyllysine.

This sequence belongs to the peptidase M16 family. PreP subfamily. In terms of assembly, monomer and homodimer; homodimerization is induced by binding of the substrate. Requires Zn(2+) as cofactor. Post-translationally, a disulfide bond locks the enzyme in the closed conformation preventing substrate entry into the catalytic chamber.

It localises to the mitochondrion matrix. Mainly exists in a closed and catalytically competent conformation but a closed-to-open switch allows substrate entry into the catalytic chamber. Substrate binding induces closure and dimerization. A disulfide bond may lock the enzyme in a closed conformation preventing substrate entry into the catalytic chamber, participating in redox regulation of the enzyme. Inhibited by metal-chelating agents. Inhibited by nickel and zinc excess, and slightly activated by manganese. Its function is as follows. Metalloendopeptidase of the mitochondrial matrix that functions in peptide cleavage and degradation rather than in protein processing. Has an ATP-independent activity. Specifically cleaves peptides in the range of 5 to 65 residues. Shows a preference for cleavage after small polar residues and before basic residues, but without any positional preference. Degrades the transit peptides of mitochondrial proteins after their cleavage. Also degrades other unstructured peptides. It is also able to degrade amyloid-beta protein 40, one of the peptides produced by APP processing, when it accumulates in mitochondrion. It is a highly efficient protease, at least toward amyloid-beta protein 40. Cleaves that peptide at a specific position and is probably not processive, releasing digested peptides intermediates that can be further cleaved subsequently. It is also able to degrade amyloid-beta protein 42. The protein is Presequence protease, mitochondrial of Pongo abelii (Sumatran orangutan).